Here is a 259-residue protein sequence, read N- to C-terminus: Thiamine thiazole synthase (259 aa).

Residues A33, 52–53 (ER), G60, V124, and 152–154 (HVD) each bind NAD(+). The Fe cation site is built by D154 and H169. An NAD(+)-binding site is contributed by M219. Residue R229 coordinates glycine.

The protein belongs to the THI4 family. In terms of assembly, homooctamer; tetramer of dimers. Fe(2+) serves as cofactor.

It carries out the reaction hydrogen sulfide + glycine + NAD(+) = ADP-5-ethyl-4-methylthiazole-2-carboxylate + nicotinamide + 3 H2O + H(+). It participates in cofactor biosynthesis; thiamine diphosphate biosynthesis. Functionally, involved in the biosynthesis of the thiazole moiety of thiamine. Catalyzes the conversion of NAD and glycine to adenosine diphosphate 5-(2-hydroxyethyl)-4-methylthiazole-2-carboxylate (ADT), an adenylated thiazole intermediate, using free sulfide as a source of sulfur. The sequence is that of Thiamine thiazole synthase from Pyrobaculum neutrophilum (strain DSM 2338 / JCM 9278 / NBRC 100436 / V24Sta) (Thermoproteus neutrophilus).